A 226-amino-acid polypeptide reads, in one-letter code: SPI-1 type 3 secretion system stator protein (226 aa).

The core secretion machinery of the T3SS is composed of approximately 20 different proteins, including cytoplasmic components, a base, an export apparatus and a needle. This subunit is part of the cytosolic complex. Interacts directly with InvC/SctN1 (T3SS-1 ATPase) and SpaO/SctQ (the major sorting platform component).

Its subcellular location is the cytoplasm. In terms of biological role, component of the type III secretion system (T3SS), also called injectisome, which is used to inject bacterial effector proteins into eukaryotic host cells. Acts as a regulator of the InvC/SctN1 ATPase activity. Required for invasion and secretion. The protein is SPI-1 type 3 secretion system stator protein of Salmonella typhimurium (strain SL1344).